The sequence spans 951 residues: Multiple C2 and transmembrane domain-containing protein 1 (951 aa).

4 disordered regions span residues leucine 29 to glycine 79, serine 92 to glycine 117, leucine 129 to serine 198, and leucine 210 to lysine 231. A compositionally biased stretch (gly residues) spans valine 31–glycine 43. The span at proline 147–serine 168 shows a compositional bias: low complexity. Basic and acidic residues predominate over residues arginine 174–arginine 184. Residues proline 219 to alanine 228 are compositionally biased toward low complexity. C2 domains are found at residues lysine 240 to leucine 358, glutamine 404 to leucine 521, and glutamine 555 to leucine 676. Residues aspartate 275, aspartate 281, aspartate 328, aspartate 330, aspartate 336, aspartate 438, aspartate 444, aspartate 491, aspartate 493, aspartate 499, aspartate 594, aspartate 600, aspartate 646, aspartate 648, and aspartate 654 each contribute to the Ca(2+) site. Transmembrane regions (helical) follow at residues phenylalanine 763–leucine 783 and proline 866–isoleucine 886.

Belongs to the MCTP family. Ca(2+) serves as cofactor.

Its subcellular location is the cytoplasmic vesicle. It is found in the secretory vesicle. The protein resides in the synaptic vesicle membrane. It localises to the recycling endosome. The protein localises to the endoplasmic reticulum membrane. Its function is as follows. Calcium sensor which is essential for the stabilization of normal baseline neurotransmitter release and for the induction and long-term maintenance of presynaptic homeostatic plasticity. In Mus musculus (Mouse), this protein is Multiple C2 and transmembrane domain-containing protein 1.